A 297-amino-acid chain; its full sequence is tRNA pseudouridine synthase B (297 aa).

Residue Asp44 is the Nucleophile of the active site.

The protein belongs to the pseudouridine synthase TruB family. Type 1 subfamily.

It carries out the reaction uridine(55) in tRNA = pseudouridine(55) in tRNA. Its function is as follows. Responsible for synthesis of pseudouridine from uracil-55 in the psi GC loop of transfer RNAs. In Corynebacterium aurimucosum (strain ATCC 700975 / DSM 44827 / CIP 107346 / CN-1) (Corynebacterium nigricans), this protein is tRNA pseudouridine synthase B.